A 568-amino-acid polypeptide reads, in one-letter code: DNA mismatch repair protein MutL (568 aa).

It belongs to the DNA mismatch repair MutL/HexB family.

This protein is involved in the repair of mismatches in DNA. It is required for dam-dependent methyl-directed DNA mismatch repair. May act as a 'molecular matchmaker', a protein that promotes the formation of a stable complex between two or more DNA-binding proteins in an ATP-dependent manner without itself being part of a final effector complex. This is DNA mismatch repair protein MutL from Nostoc punctiforme (strain ATCC 29133 / PCC 73102).